A 95-amino-acid polypeptide reads, in one-letter code: Neurexophilin-3 (95 aa).

2 N-linked (GlcNAc...) asparagine glycosylation sites follow: N1 and N7. Residues 1 to 21 form an III region; sequence NATGQGNISISLVPPSKAVEX. Residues 22–30 are IV (linker domain); it reads HQXQQIFIE. The v (Cys-rich) stretch occupies residues 31–95; that stretch reads AKASKIFNCR…YIAFYSTDYR (65 aa).

This sequence belongs to the neurexophilin family.

It is found in the secreted. In terms of biological role, may be signaling molecules that resemble neuropeptides. Ligand for alpha-neurexins. The sequence is that of Neurexophilin-3 (NXPH3) from Macaca mulatta (Rhesus macaque).